Here is a 932-residue protein sequence, read N- to C-terminus: DNA mismatch repair protein MutS (932 aa).

Acidic residues predominate over residues 1–13; sequence MTTDTDTDVDAGT. Residues 1–26 are disordered; sequence MTTDTDTDVDAGTDLEPQPEGPPEKM. 648-655 serves as a coordination point for ATP; it reads GPNMSGKS. A disordered region spans residues 865–892; it reads NQQNQASDDDEIARSPRGADTNTDAGIN.

Belongs to the DNA mismatch repair MutS family.

In terms of biological role, this protein is involved in the repair of mismatches in DNA. It is possible that it carries out the mismatch recognition step. This protein has a weak ATPase activity. The chain is DNA mismatch repair protein MutS from Haloquadratum walsbyi (strain DSM 16790 / HBSQ001).